Here is a 68-residue protein sequence, read N- to C-terminus: Alpha-conotoxin PIVA (68 aa).

The N-terminal stretch at 1–16 is a signal peptide; it reads MFTVFLLVVLATTVVS. A propeptide spanning residues 17–41 is cleaved from the precursor; it reads FTSDRASDDRNTNDKASRLLSHVVR. Intrachain disulfides connect cysteine 43/cysteine 57, cysteine 44/cysteine 52, and cysteine 55/cysteine 64. 4-hydroxyproline; partial occurs at positions 48 and 54. The residue at position 61 (proline 61) is a 4-hydroxyproline. Glutamine 66 is subject to Glutamine amide.

The protein belongs to the conotoxin A superfamily. In terms of tissue distribution, expressed by the venom duct.

It is found in the secreted. Its function is as follows. Alpha-conotoxins act on postsynaptic membranes, they bind to the nicotinic acetylcholine receptors (nAChR) and thus inhibit them. This toxin has higher affinity for the adult subtype (alpha-1-beta-1-gamma-delta (CHRNA1-CHRNB1-CHRNG-CHRND) subunits) (IC(50)=2.3 nM) of the receptor than for the fetal subtype (alpha-1-beta-1-epsilon-delta (CHRNA1-CHRNB1-CHRND-CHRNE) subunits) (IC(50)=22 nM). In Conus purpurascens (Purple cone), this protein is Alpha-conotoxin PIVA.